The following is a 283-amino-acid chain: Pantothenate synthetase (283 aa).

30 to 37 (MGYLHEGH) contacts ATP. Histidine 37 acts as the Proton donor in catalysis. Glutamine 61 is a (R)-pantoate binding site. A beta-alanine-binding site is contributed by glutamine 61. 147–150 (GRKD) serves as a coordination point for ATP. Glutamine 153 provides a ligand contact to (R)-pantoate. Residues valine 176 and 184-187 (MSSR) contribute to the ATP site.

This sequence belongs to the pantothenate synthetase family. As to quaternary structure, homodimer.

It localises to the cytoplasm. The catalysed reaction is (R)-pantoate + beta-alanine + ATP = (R)-pantothenate + AMP + diphosphate + H(+). It participates in cofactor biosynthesis; (R)-pantothenate biosynthesis; (R)-pantothenate from (R)-pantoate and beta-alanine: step 1/1. Its function is as follows. Catalyzes the condensation of pantoate with beta-alanine in an ATP-dependent reaction via a pantoyl-adenylate intermediate. In Syntrophotalea carbinolica (strain DSM 2380 / NBRC 103641 / GraBd1) (Pelobacter carbinolicus), this protein is Pantothenate synthetase.